The following is a 63-amino-acid chain: Ct-IT2 (63 aa).

The region spanning 1 to 63 (KDGYPMDSKG…VWDKATNKCG (63 aa)) is the LCN-type CS-alpha/beta domain. 4 cysteine pairs are disulfide-bonded: C11/C62, C15/C36, C22/C43, and C26/C45. Position 63 is a glycine amide (G63).

Expressed by the venom gland.

The protein localises to the secreted. In terms of biological role, beta toxins bind voltage-independently at site-4 of sodium channels (Nav) and shift the voltage of activation toward more negative potentials thereby affecting sodium channel activation and promoting spontaneous and repetitive firing. Is highly active on insects, since it provokes paralysis and death when injected into crickets. In Centruroides tecomanus (Scorpion), this protein is Ct-IT2.